Consider the following 451-residue polypeptide: UDP-N-acetylmuramate--L-alanine ligase (451 aa).

Residue 110–116 (GTHGKTT) coordinates ATP.

It belongs to the MurCDEF family.

The protein localises to the cytoplasm. It catalyses the reaction UDP-N-acetyl-alpha-D-muramate + L-alanine + ATP = UDP-N-acetyl-alpha-D-muramoyl-L-alanine + ADP + phosphate + H(+). The protein operates within cell wall biogenesis; peptidoglycan biosynthesis. Its function is as follows. Cell wall formation. The protein is UDP-N-acetylmuramate--L-alanine ligase of Francisella tularensis subsp. holarctica (strain FTNF002-00 / FTA).